We begin with the raw amino-acid sequence, 334 residues long: Putative peptide import ATP-binding protein BAB2_1053 (334 aa).

Residues 22-272 (VRTDDLVRDF…PLHPYSRALL (251 aa)) form the ABC transporter domain. 64–71 (GESGSGKS) lines the ATP pocket.

The protein belongs to the ABC transporter superfamily. The complex is composed of two ATP-binding proteins (BAB2_1052 and BAB2_1053), two transmembrane proteins (BAB2_1050 and BAB2_1051) and a solute-binding protein (BAB2_1049).

Its subcellular location is the cell inner membrane. Functionally, probably part of an ABC transporter complex that could be involved in peptide import. Probably responsible for energy coupling to the transport system. This chain is Putative peptide import ATP-binding protein BAB2_1053, found in Brucella abortus (strain 2308).